Here is a 347-residue protein sequence, read N- to C-terminus: 4-hydroxy-2-oxovalerate aldolase (347 aa).

In terms of domain architecture, Pyruvate carboxyltransferase spans 2–252 (ILISDATLRD…DTRTTFERVM (251 aa)). 10–11 (RD) provides a ligand contact to substrate. D11 provides a ligand contact to Mn(2+). The active-site Proton acceptor is the H14. Substrate contacts are provided by S164 and H191. Mn(2+)-binding residues include H191 and H193.

The protein belongs to the 4-hydroxy-2-oxovalerate aldolase family.

It catalyses the reaction (S)-4-hydroxy-2-oxopentanoate = acetaldehyde + pyruvate. This Burkholderia pseudomallei (strain 1710b) protein is 4-hydroxy-2-oxovalerate aldolase (mhpE).